A 146-amino-acid polypeptide reads, in one-letter code: Basic phospholipase A2 (146 aa).

The first 21 residues, 1–21, serve as a signal peptide directing secretion; it reads MYPAHLLVLLAVCVSLLGAAS. The propeptide occupies 22 to 27; that stretch reads IPPLPL. 7 disulfides stabilise this stretch: cysteine 38-cysteine 98, cysteine 54-cysteine 145, cysteine 56-cysteine 72, cysteine 71-cysteine 126, cysteine 78-cysteine 119, cysteine 87-cysteine 112, and cysteine 105-cysteine 117. Tyrosine 55, glycine 57, and glycine 59 together coordinate Ca(2+). Histidine 75 is a catalytic residue. Aspartate 76 is a binding site for Ca(2+). Aspartate 120 is an active-site residue.

It belongs to the phospholipase A2 family. Group I subfamily. D49 sub-subfamily. The cofactor is Ca(2+). In terms of tissue distribution, expressed by the venom gland.

The protein resides in the secreted. The catalysed reaction is a 1,2-diacyl-sn-glycero-3-phosphocholine + H2O = a 1-acyl-sn-glycero-3-phosphocholine + a fatty acid + H(+). Functionally, snake venom phospholipase A2 (PLA2) that inhibits neuromuscular transmission by blocking acetylcholine release from the nerve termini. PLA2 catalyzes the calcium-dependent hydrolysis of the 2-acyl groups in 3-sn-phosphoglycerides. This chain is Basic phospholipase A2, found in Hydrophis hardwickii (Hardwick's spine-bellied seasnake).